Reading from the N-terminus, the 402-residue chain is Protein RETARDED ROOT GROWTH-LIKE (402 aa).

Residues 375–395 (SATLEWLIIILISMEIAISFY) form a helical membrane-spanning segment.

It belongs to the RMD1/sif2 family. Highly expressed in germinating seeds and developing seedlings. Also present at low levels in seedlings, roots, leaves, stems and flowers, and barely in siliques.

It localises to the mitochondrion membrane. The protein resides in the mitochondrion. Its function is as follows. Mediates abscisic acid (ABA) signal transduction through mitochondrial retrograde regulation involving ABI4 during seed germination and seedling growth, and leading to the production of reactive oxygen species (ROS) by the alternative respiratory pathway. Required for the maintenance of mitochondrial structure. The sequence is that of Protein RETARDED ROOT GROWTH-LIKE from Arabidopsis thaliana (Mouse-ear cress).